The following is a 249-amino-acid chain: Aliphatic sulfonates import ATP-binding protein SsuB 2 (249 aa).

An ABC transporter domain is found at 15 to 231; sequence VHVRDLARRF…DHGDPRFAQF (217 aa). 47–54 provides a ligand contact to ATP; that stretch reads GRSGSGKS.

It belongs to the ABC transporter superfamily. Aliphatic sulfonates importer (TC 3.A.1.17.2) family. In terms of assembly, the complex is composed of two ATP-binding proteins (SsuB), two transmembrane proteins (SsuC) and a solute-binding protein (SsuA).

Its subcellular location is the cell inner membrane. It carries out the reaction ATP + H2O + aliphatic sulfonate-[sulfonate-binding protein]Side 1 = ADP + phosphate + aliphatic sulfonateSide 2 + [sulfonate-binding protein]Side 1.. Part of the ABC transporter complex SsuABC involved in aliphatic sulfonates import. Responsible for energy coupling to the transport system. In Rhizobium johnstonii (strain DSM 114642 / LMG 32736 / 3841) (Rhizobium leguminosarum bv. viciae), this protein is Aliphatic sulfonates import ATP-binding protein SsuB 2.